We begin with the raw amino-acid sequence, 82 residues long: Toxin Tpa7 (82 aa).

The N-terminal stretch at 1-20 is a signal peptide; it reads MKGMILLISCLMLIEVVVEC. In terms of domain architecture, LCN-type CS-alpha/beta spans 21-82; that stretch reads KEGYPLDTLN…KIWDLKKNKC (62 aa). 4 disulfides stabilise this stretch: C32/C82, C36/C58, C44/C63, and C48/C65.

The protein belongs to the long (4 C-C) scorpion toxin superfamily. Sodium channel inhibitor family. Beta subfamily. Expressed by the venom gland.

The protein localises to the secreted. Its function is as follows. Beta toxins bind voltage-independently at site-4 of sodium channels (Nav) and shift the voltage of activation toward more negative potentials thereby affecting sodium channel activation and promoting spontaneous and repetitive firing. This Tityus pachyurus (Colombian scorpion) protein is Toxin Tpa7.